The following is a 445-amino-acid chain: UNC93-like protein MFSD11 (445 aa).

The helical transmembrane segment at 8–28 (LLNIIILGIGFMFMFTAFQTS) threads the bilayer. Residue Asn40 is glycosylated (N-linked (GlcNAc...) asparagine). 4 helical membrane-spanning segments follow: residues 53–73 (AIIY…VAVI), 74–94 (GCQM…AMFI), 98–118 (TWSF…LWTA), and 138–158 (IFWA…YLAW). An N-linked (GlcNAc...) asparagine glycan is attached at Asn163. 7 helical membrane passes run 170–190 (RTVF…FFLI), 239–259 (MLLL…YSGV), 277–297 (LIGL…GLFG), 309–329 (PVVI…YLYM), 345–365 (AFIN…GLGD), 385–405 (APAF…AFFY), and 415–435 (LLIL…VEWG).

The protein belongs to the unc-93 family.

The protein resides in the membrane. The protein is UNC93-like protein MFSD11 (mfsd11) of Xenopus tropicalis (Western clawed frog).